Consider the following 157-residue polypeptide: Arginine repressor (157 aa).

Belongs to the ArgR family.

Its subcellular location is the cytoplasm. Its pathway is amino-acid biosynthesis; L-arginine biosynthesis [regulation]. Its function is as follows. Regulates arginine biosynthesis genes. The protein is Arginine repressor of Deinococcus radiodurans (strain ATCC 13939 / DSM 20539 / JCM 16871 / CCUG 27074 / LMG 4051 / NBRC 15346 / NCIMB 9279 / VKM B-1422 / R1).